Consider the following 1083-residue polypeptide: Phospholipase D beta 1 (1083 aa).

Composition is skewed to pro residues over residues 26-38 (RPPS…PPPT), 46-66 (YPYP…PPPH), and 132-148 (QYPP…PPPQ). The tract at residues 26–231 (RPPSSEPYPP…PNSSFPSNSH (206 aa)) is disordered. Composition is skewed to polar residues over residues 191–213 (ISTN…SWQS) and 222–231 (PNSSFPSNSH). Residues 252-393 (HSADMQMTLF…YSGAKIEGTY (142 aa)) form the C2 domain. Ca(2+) is bound at residue Asp-455. One can recognise a PLD phosphodiesterase 1 domain in the interval 595–630 (TIYTHHQKNVIVDADAGGNRRKIIAFVGGLDLCDGR). Active-site residues include His-600, Lys-602, and Asp-607. His-600 provides a ligand contact to a 1,2-diacyl-sn-glycero-3-phosphate. Residues His-636 and His-668 each contribute to the Ca(2+) site. Positions 796 and 934 each coordinate a 1,2-diacyl-sn-glycero-3-phosphate. One can recognise a PLD phosphodiesterase 2 domain in the interval 929–956 (FMVYVHSKGMVVDDEYVVIGSANINQRS). Catalysis depends on residues His-934, Lys-936, and Asp-941. Glu-997 lines the Ca(2+) pocket.

It belongs to the phospholipase D family. C2-PLD subfamily. Ca(2+) is required as a cofactor. In terms of tissue distribution, expressed in stems, and to a lower amount in leaves, flowers and siliques.

Its subcellular location is the cytoplasm. It localises to the membrane. It catalyses the reaction a 1,2-diacyl-sn-glycero-3-phosphocholine + H2O = a 1,2-diacyl-sn-glycero-3-phosphate + choline + H(+). Its activity is regulated as follows. Inhibited by neomycin. Up-regulated by PIP2 binding. Its function is as follows. Hydrolyzes glycerol-phospholipids at the terminal phosphodiesteric bond to generate phosphatidic acids (PA). Plays an important role in various cellular processes, including phytohormone action, vesicular trafficking, secretion, cytoskeletal arrangement, meiosis, tumor promotion, pathogenesis, membrane deterioration and senescence. Involved in regulating stomatal movement and plant-water status. Can use phosphatidylserine (PS) and phosphatidylethanolamine (PE) as substrates only in the presence of PIP2. Can use phosphatidylcholine (PC), phosphatidylglycerol (PG) or N-acylphosphatidylethanolamine (NAPE) as substrates in the presence of PE and PIP2. Modulates defense responses to bacterial and fungal pathogens. This chain is Phospholipase D beta 1, found in Arabidopsis thaliana (Mouse-ear cress).